A 399-amino-acid chain; its full sequence is S-adenosylmethionine synthase (399 aa).

Histidine 17 contacts ATP. Aspartate 19 lines the Mg(2+) pocket. Glutamate 45 contributes to the K(+) binding site. Glutamate 58 and glutamine 101 together coordinate L-methionine. Residues 101–111 (QSADIAMGVDQ) form a flexible loop region. ATP contacts are provided by residues 177–179 (DGK), 244–245 (RF), aspartate 253, 259–260 (RK), alanine 276, and lysine 280. Aspartate 253 serves as a coordination point for L-methionine. Residue lysine 284 coordinates L-methionine.

This sequence belongs to the AdoMet synthase family. Homotetramer; dimer of dimers. Mg(2+) serves as cofactor. It depends on K(+) as a cofactor.

The protein localises to the cytoplasm. The catalysed reaction is L-methionine + ATP + H2O = S-adenosyl-L-methionine + phosphate + diphosphate. Its pathway is amino-acid biosynthesis; S-adenosyl-L-methionine biosynthesis; S-adenosyl-L-methionine from L-methionine: step 1/1. Catalyzes the formation of S-adenosylmethionine (AdoMet) from methionine and ATP. The overall synthetic reaction is composed of two sequential steps, AdoMet formation and the subsequent tripolyphosphate hydrolysis which occurs prior to release of AdoMet from the enzyme. In Bacillus mycoides (strain KBAB4) (Bacillus weihenstephanensis), this protein is S-adenosylmethionine synthase.